Here is a 258-residue protein sequence, read N- to C-terminus: Ribose-5-phosphate isomerase (258 aa).

This sequence belongs to the ribose 5-phosphate isomerase family.

It localises to the cytoplasm. The catalysed reaction is aldehydo-D-ribose 5-phosphate = D-ribulose 5-phosphate. It participates in carbohydrate degradation; pentose phosphate pathway; D-ribose 5-phosphate from D-ribulose 5-phosphate (non-oxidative stage): step 1/1. In Saccharomyces cerevisiae (strain YJM789) (Baker's yeast), this protein is Ribose-5-phosphate isomerase (RKI1).